The primary structure comprises 701 residues: Elongation factor G (701 aa).

Positions 11–287 (NKVRNIGIMA…AVVDYLPSPL (277 aa)) constitute a tr-type G domain. Residues 20 to 27 (AHIDAGKT), 84 to 88 (DTPGH), and 138 to 141 (NKMD) each bind GTP.

This sequence belongs to the TRAFAC class translation factor GTPase superfamily. Classic translation factor GTPase family. EF-G/EF-2 subfamily.

The protein resides in the cytoplasm. In terms of biological role, catalyzes the GTP-dependent ribosomal translocation step during translation elongation. During this step, the ribosome changes from the pre-translocational (PRE) to the post-translocational (POST) state as the newly formed A-site-bound peptidyl-tRNA and P-site-bound deacylated tRNA move to the P and E sites, respectively. Catalyzes the coordinated movement of the two tRNA molecules, the mRNA and conformational changes in the ribosome. The polypeptide is Elongation factor G (Mycobacterium sp. (strain JLS)).